We begin with the raw amino-acid sequence, 164 residues long: MHVTVGELIGNFILITGSFILLLVLIKKFAWSNITGIFEERAEKIASDIDRAEEARQKAEVLAQKREDELAGSRKEAKTIIENAKETAEQSKANILADAKLEAGHLKEKANQEIAQNKVEALQSVKGEVADLTISLAGKIISQNLDSHAHKALIDQYIDQLGEA.

Residues 6 to 26 (GELIGNFILITGSFILLLVLI) form a helical membrane-spanning segment.

It belongs to the ATPase B chain family. In terms of assembly, F-type ATPases have 2 components, F(1) - the catalytic core - and F(0) - the membrane proton channel. F(1) has five subunits: alpha(3), beta(3), gamma(1), delta(1), epsilon(1). F(0) has three main subunits: a(1), b(2) and c(10-14). The alpha and beta chains form an alternating ring which encloses part of the gamma chain. F(1) is attached to F(0) by a central stalk formed by the gamma and epsilon chains, while a peripheral stalk is formed by the delta and b chains.

The protein localises to the cell membrane. Its function is as follows. F(1)F(0) ATP synthase produces ATP from ADP in the presence of a proton or sodium gradient. F-type ATPases consist of two structural domains, F(1) containing the extramembraneous catalytic core and F(0) containing the membrane proton channel, linked together by a central stalk and a peripheral stalk. During catalysis, ATP synthesis in the catalytic domain of F(1) is coupled via a rotary mechanism of the central stalk subunits to proton translocation. Component of the F(0) channel, it forms part of the peripheral stalk, linking F(1) to F(0). This is ATP synthase subunit b from Streptococcus pneumoniae serotype 2 (strain D39 / NCTC 7466).